Here is a 593-residue protein sequence, read N- to C-terminus: Early nodule-specific protein 2 (593 aa).

Pro residues predominate over residues Glu71–His110. The disordered stretch occupies residues Glu71–Gln593. 2 stretches are compositionally biased toward basic and acidic residues: residues Pro123–Pro138 and Pro166–Pro195. Positions Pro196–Gln210 are enriched in pro residues. Basic and acidic residues-rich tracts occupy residues Pro227 to Pro265 and Pro275 to Pro292. Over residues Val294 to Lys306 the composition is skewed to pro residues. 4 stretches are compositionally biased toward basic and acidic residues: residues Pro339–Pro350, Pro360–Pro372, Pro382–Pro394, and Pro404–Pro421. Pro residues predominate over residues Pro422–Tyr435. Basic and acidic residues predominate over residues Pro506–Leu522. Residues Lys532 to Lys558 show a composition bias toward pro residues.

Belongs to the nodulin 75 family.

In terms of biological role, involved in early stages of root nodule development. The protein is Early nodule-specific protein 2 of Medicago truncatula (Barrel medic).